We begin with the raw amino-acid sequence, 140 residues long: Histone H2B (140 aa).

Over residues 1–10 (MPPKAAEKKP) the composition is skewed to basic and acidic residues. The disordered stretch occupies residues 1–48 (MPPKAAEKKPSTGGKAPAGKAPAEKKEAGKKTAAAASGEKKKRGKTRK). Residues lysine 8 and lysine 9 each carry the N6-acetyllysine; alternate modification. Residues lysine 8 and lysine 9 each participate in a glycyl lysine isopeptide (Lys-Gly) (interchain with G-Cter in SUMO); alternate cross-link. Low complexity predominate over residues 11 to 21 (STGGKAPAGKA). Residue lysine 15 is modified to N6-acetyllysine. Lysine 25 carries the post-translational modification N6-acetyllysine; alternate. Lysine 25 participates in a covalent cross-link: Glycyl lysine isopeptide (Lys-Gly) (interchain with G-Cter in SUMO); alternate. Residue lysine 26 forms a Glycyl lysine isopeptide (Lys-Gly) (interchain with G-Cter in SUMO) linkage. Lysine 134 is covalently cross-linked (Glycyl lysine isopeptide (Lys-Gly) (interchain with G-Cter in ubiquitin)).

This sequence belongs to the histone H2B family. In terms of assembly, the nucleosome is a histone octamer containing two molecules each of H2A, H2B, H3 and H4 assembled in one H3-H4 heterotetramer and two H2A-H2B heterodimers. The octamer wraps approximately 147 bp of DNA. Monoubiquitinated by the ubc2-bre1 complex to form H2BK123ub1. H2BK123ub1 gives a specific tag for epigenetic transcriptional activation and is also prerequisite for H3K4me and H3K79me formation. H2BK123ub1 also modulates the formation of double-strand breaks during meiosis and is a prerequisite for DNA-damage checkpoint activation. Post-translationally, acetylated by gcn5 to form H2BK11ac and H2BK16ac. H2BK16ac can also be formed by esa1. Acetylation of N-terminal lysines and particularly formation of H2BK11acK16ac has a positive effect on transcription. In terms of processing, sumoylation to form H2BK6su or H2BK7su, and probably also H2BK16su or H2BK17su, occurs preferentially near the telomeres and represses gene transcription.

Its subcellular location is the nucleus. It is found in the chromosome. Its function is as follows. Core component of nucleosome. Nucleosomes wrap and compact DNA into chromatin, limiting DNA accessibility to the cellular machineries which require DNA as a template. Histones thereby play a central role in transcription regulation, DNA repair, DNA replication and chromosomal stability. DNA accessibility is regulated via a complex set of post-translational modifications of histones, also called histone code, and nucleosome remodeling. The chain is Histone H2B (htbA) from Emericella nidulans (strain FGSC A4 / ATCC 38163 / CBS 112.46 / NRRL 194 / M139) (Aspergillus nidulans).